Here is a 238-residue protein sequence, read N- to C-terminus: Uroporphyrinogen-III C-methyltransferase (238 aa).

S-adenosyl-L-homocysteine is bound by residues Pro-11, 87 to 89 (GGD), 117 to 118 (TS), and Met-170.

It belongs to the precorrin methyltransferase family. As to quaternary structure, monomer.

The enzyme catalyses uroporphyrinogen III + 2 S-adenosyl-L-methionine = precorrin-2 + 2 S-adenosyl-L-homocysteine + H(+). The protein operates within cofactor biosynthesis; adenosylcobalamin biosynthesis; precorrin-2 from uroporphyrinogen III: step 1/1. Its pathway is porphyrin-containing compound metabolism; siroheme biosynthesis; precorrin-2 from uroporphyrinogen III: step 1/1. With respect to regulation, SUMT exhibits a substrate inhibition phenomenon at uroporphyrinogen III concentrations above 0.5 uM; this property might play a regulatory role in cobalamin biosynthesis. Functionally, catalyzes the two successive C-2 and C-7 methylation reactions involved in the conversion of uroporphyrinogen III to precorrin-2 via the intermediate formation of precorrin-1. It is a step in the biosynthesis of both cobalamin (vitamin B12) and siroheme. The chain is Uroporphyrinogen-III C-methyltransferase from Priestia megaterium (Bacillus megaterium).